The sequence spans 275 residues: Large ribosomal subunit protein uL2 (275 aa).

2 disordered regions span residues 28–59 (KPYA…GGHK) and 224–275 (AMNP…RHKR). Over residues 35–46 (DTQSSTAGRNNN) the composition is skewed to polar residues. Over residues 50-59 (TTRHKGGGHK) the composition is skewed to basic residues.

This sequence belongs to the universal ribosomal protein uL2 family. In terms of assembly, part of the 50S ribosomal subunit. Forms a bridge to the 30S subunit in the 70S ribosome.

One of the primary rRNA binding proteins. Required for association of the 30S and 50S subunits to form the 70S ribosome, for tRNA binding and peptide bond formation. It has been suggested to have peptidyltransferase activity; this is somewhat controversial. Makes several contacts with the 16S rRNA in the 70S ribosome. The protein is Large ribosomal subunit protein uL2 of Paraburkholderia phymatum (strain DSM 17167 / CIP 108236 / LMG 21445 / STM815) (Burkholderia phymatum).